The sequence spans 194 residues: ATP-dependent Clp protease proteolytic subunit (194 aa).

The active-site Nucleophile is S97. H122 is a catalytic residue.

This sequence belongs to the peptidase S14 family. Fourteen ClpP subunits assemble into 2 heptameric rings which stack back to back to give a disk-like structure with a central cavity, resembling the structure of eukaryotic proteasomes.

It is found in the cytoplasm. The enzyme catalyses Hydrolysis of proteins to small peptides in the presence of ATP and magnesium. alpha-casein is the usual test substrate. In the absence of ATP, only oligopeptides shorter than five residues are hydrolyzed (such as succinyl-Leu-Tyr-|-NHMec, and Leu-Tyr-Leu-|-Tyr-Trp, in which cleavage of the -Tyr-|-Leu- and -Tyr-|-Trp bonds also occurs).. In terms of biological role, cleaves peptides in various proteins in a process that requires ATP hydrolysis. Has a chymotrypsin-like activity. Plays a major role in the degradation of misfolded proteins. In Lactobacillus helveticus (strain DPC 4571), this protein is ATP-dependent Clp protease proteolytic subunit.